A 358-amino-acid chain; its full sequence is Dynein axonemal assembly factor 10 (358 aa).

6 WD repeats span residues E63–F105, A109–A154, N162–E205, N207–G249, T258–V298, and I320–V358.

Interacts with PIH1D1; the interaction associates DNAAF10 with the R2TP complex. Interacts with several dynein axonemal assembly factors.

It localises to the dynein axonemal particle. Functionally, key assembly factor specifically required for the stability of axonemal dynein heavy chains in cytoplasm. This Chlamydomonas reinhardtii (Chlamydomonas smithii) protein is Dynein axonemal assembly factor 10 (dnaaf10).